The primary structure comprises 84 residues: Acyl-CoA-binding protein (84 aa).

The ACB domain occupies 1–84 (MTTFEEAAQK…LYEQLATKYA (84 aa)). An acyl-CoA contacts are provided by residues lysine 12, 27 to 31 (YGLYK), lysine 53, and tyrosine 72.

It belongs to the ACBP family. As to quaternary structure, interacts with dhkA.

Binds to acyl-CoA. Processed into the SDF-2 (spore differentiation factor 2) a peptide which triggers sporulation. SDF-2 appears to stimulate prestalk cells to release additional SDF-2 by acting through a signal transduction pathway that also involves dhkA, regA and PKA. Induces encapsulation of prespore cells in a dhkA-dependent manner. GABA induces the release of acbA from prespore cells and induces the exposure of tagC on the surface of prestalk cells where it can convert acbA to SDF-2. Glutamate acts as a competitive inhibitor and is also able to inhibit induction of sporulation by SDF-2. The chain is Acyl-CoA-binding protein (acbA) from Dictyostelium discoideum (Social amoeba).